Reading from the N-terminus, the 974-residue chain is Membrane-associated phosphatidylinositol transfer protein 3 (974 aa).

Ser-30, Ser-31, Ser-109, Ser-295, Ser-298, Ser-321, Ser-343, and Ser-495 each carry phosphoserine. A disordered region spans residues 284–304 (GDSPASSSRKGSISSTQDTPV). A compositionally biased stretch (polar residues) spans 292–302 (RKGSISSTQDT). Disordered regions lie at residues 323 to 346 (IDISSGLEDEEPKRPLPRKQSDSS) and 491 to 536 (SSRD…SMAP). Residues 390-594 (FDFDVSDFFL…VAFILRQVMR (205 aa)) enclose the DDHD domain. Over residues 520 to 533 (EGSSHSESSESSDS) the composition is skewed to low complexity. A phosphoserine mark is found at Ser-612, Ser-907, Ser-928, and Ser-946. The tract at residues 927 to 974 (MSVQQPDPPAANPKPERAQSQPESDKDHERPLPALSWARGPPKFESVP) is disordered.

This sequence belongs to the PtdIns transfer protein family. PI transfer class IIA subfamily. Interacts with PTK2B via its C-terminus. As to expression, detected in brain and spleen, and at low levels in ovary.

It localises to the endomembrane system. Its function is as follows. Catalyzes the transfer of phosphatidylinositol and phosphatidylcholine between membranes (in vitro). Binds calcium ions. This is Membrane-associated phosphatidylinositol transfer protein 3 (PITPNM3) from Homo sapiens (Human).